The chain runs to 1022 residues: MIKAIDKESINNICSGQVIFDLSIAVKELIENSIDAGATTVEIRLKEYGEEFIEVIDNGSGVEPSNFVALTMKHCTSKLESFSDLLSIETYGFRGEALSSLCSLSNCIITTRTKNQVTAQRLVFDKEGKIQTQTPVAREVGTTVQLSNLFKGLPVRYQEFKRNIKKEYAKLLTILQAYALISTNTRITCYNQAGKSPRSCVLSTTSGSTIRDNLINVFGTKMSQSLDEFTASDSLFKVNGLISKIGIGSGTGQSISNSSSSSSQSSSQLSSSSSSSSSSQSSQLSIGSLSRSCADRQFFFVNSRPFEHSKLAKEINSLYQSFHKRGSYPVVIFNIEMPTNNYDVNVTPDKRTIFIQKEQQLLLLITDGLKTMWETAQSVFDTNQLGQFTFNDENENDNSNNNKQSKISSFPNLYTLKTEEDENNNKITTPIKKHSTTTTTSSLNSPSSNKKSSNSTSSSSSSNNKNNRNNLEEDGDDSFDITDQQPLKRAKYDGNYNNSNKKPELPKTPYPNKKKNNENEDEDEDEDNYVQPVFSNVNKSKNSSNSGSSNSLDDIIDDNEFISRSNGNSSNFMDDFEFKGSSNNIGSSSNGIKLKTISNNNNSNNSNNSNKIIDDINKTIDKMKQQQQPQQKMGLNDDGDDEEQQKQKQQQQQQKRKQQQQQQQIEEEEEETIDGYKQKNSKTFDITIKTDLNTISKQYLIRNGTFDKDNNPIIPNTALVVSNDDMVVNNNNSNEFDQNSIITTTSEKCCIVDKSIPQLDGKFSTSLGGIGAKQQQKAATQVTSQLQQQPSQTNQKTAEEELTKFFKKEYFKQMIVIGQFNLGFIIAKLGNDLFIIDQHAADEKYNFEILSKSVESSINSQPLLKPDTLSDLTSEEELIIIENVDLFKKNGFKFIIDHDAPTRFKIKLSAFPIIHGQSFGIKDIYEWIFMIKESSIPGSVNKIPRLNSLLASKACRKSIMVGTTLTHKEMKDVLNNLSTLDNPWCCPHGRPTMRHLVDLSIKDKLKQQQQQQQQKQQQQQQQ.

Disordered stretches follow at residues 251–282 (TGQSISNSSSSSSQSSSQLSSSSSSSSSSQSS), 390–527 (FNDE…EDED), and 622–676 (KMKQ…IDGY). Positions 403–412 (KQSKISSFPN) are enriched in polar residues. Low complexity-rich tracts occupy residues 436-469 (TTTTTSSLNSPSSNKKSSNSTSSSSSSNNKNNRN) and 647-664 (QKQQQQQQKRKQQQQQQQ).

It belongs to the DNA mismatch repair MutL/HexB family. Heterodimer of pms1 and mlh1 (MutL alpha). Forms a ternary complex with MutS alpha (msh2-msh6) or MutS beta (msh2-msh3).

Its subcellular location is the nucleus. Component of the post-replicative DNA mismatch repair system (MMR). Heterodimerizes with mlh1 to form MutL alpha. DNA repair is initiated by MutS alpha (msh2-msh6) or MutS beta (msh2-msh3) binding to a dsDNA mismatch, then MutL alpha is recruited to the heteroduplex. Assembly of the MutL-MutS-heteroduplex ternary complex in presence of rfc and pcna is sufficient to activate endonuclease activity of pms1. It introduces single-strand breaks near the mismatch and thus generates new entry points for the exonuclease exo1 to degrade the strand containing the mismatch. This Dictyostelium discoideum (Social amoeba) protein is Mismatch repair endonuclease pms1 (pms1).